We begin with the raw amino-acid sequence, 602 residues long: Elongation factor 4 (602 aa).

The region spanning 6-188 (DRIRNFCIIA…RIVRDVPPPG (183 aa)) is the tr-type G domain. Residues 18–23 (DHGKST) and 135–138 (NKID) contribute to the GTP site.

Belongs to the TRAFAC class translation factor GTPase superfamily. Classic translation factor GTPase family. LepA subfamily.

Its subcellular location is the cell membrane. It carries out the reaction GTP + H2O = GDP + phosphate + H(+). Functionally, required for accurate and efficient protein synthesis under certain stress conditions. May act as a fidelity factor of the translation reaction, by catalyzing a one-codon backward translocation of tRNAs on improperly translocated ribosomes. Back-translocation proceeds from a post-translocation (POST) complex to a pre-translocation (PRE) complex, thus giving elongation factor G a second chance to translocate the tRNAs correctly. Binds to ribosomes in a GTP-dependent manner. The protein is Elongation factor 4 of Desulforudis audaxviator (strain MP104C).